The sequence spans 151 residues: Deoxyuridine 5'-triphosphate nucleotidohydrolase (151 aa).

Residues 70-72 (RSG), asparagine 83, and 87-89 (VID) contribute to the substrate site.

It belongs to the dUTPase family. Requires Mg(2+) as cofactor.

The catalysed reaction is dUTP + H2O = dUMP + diphosphate + H(+). It participates in pyrimidine metabolism; dUMP biosynthesis; dUMP from dCTP (dUTP route): step 2/2. This enzyme is involved in nucleotide metabolism: it produces dUMP, the immediate precursor of thymidine nucleotides and it decreases the intracellular concentration of dUTP so that uracil cannot be incorporated into DNA. The sequence is that of Deoxyuridine 5'-triphosphate nucleotidohydrolase from Desulfitobacterium hafniense (strain DSM 10664 / DCB-2).